Consider the following 227-residue polypeptide: Endolytic peptidoglycan transglycosylase RlpA (227 aa).

The signal sequence occupies residues 1–21 (MMNHKFVLLILLIFYCFFLSG). A lipid anchor (N-palmitoyl cysteine) is attached at C22. C22 is lipidated: S-diacylglycerol cysteine.

It belongs to the RlpA family.

The protein resides in the cell membrane. In terms of biological role, lytic transglycosylase with a strong preference for naked glycan strands that lack stem peptides. The sequence is that of Endolytic peptidoglycan transglycosylase RlpA from Rickettsia bellii (strain RML369-C).